A 547-amino-acid chain; its full sequence is Chaperonin GroEL 1 (547 aa).

ATP-binding positions include threonine 30–proline 33, lysine 51, aspartate 87–threonine 91, glycine 415, and aspartate 494. The interval proline 524–tyrosine 547 is disordered.

This sequence belongs to the chaperonin (HSP60) family. In terms of assembly, forms a cylinder of 14 subunits composed of two heptameric rings stacked back-to-back. Interacts with the co-chaperonin GroES.

The protein resides in the cytoplasm. It carries out the reaction ATP + H2O + a folded polypeptide = ADP + phosphate + an unfolded polypeptide.. Together with its co-chaperonin GroES, plays an essential role in assisting protein folding. The GroEL-GroES system forms a nano-cage that allows encapsulation of the non-native substrate proteins and provides a physical environment optimized to promote and accelerate protein folding. The protein is Chaperonin GroEL 1 of Myxococcus xanthus (strain DK1622).